Reading from the N-terminus, the 385-residue chain is Hemagglutinin-esterase (385 aa).

Residues 1–11 (MLIIFLFFNFC) form the signal peptide. An esterase domain 1 region spans residues 1 to 121 (MLIIFLFFNF…SNDVWIFNKV (121 aa)). Residues 12–361 (YGFNEPLNVV…LNCFYDPLPI (350 aa)) are Virion surface-facing. The Nucleophile role is filled by Ser34. Cys38 and Cys59 form a disulfide bridge. N-linked (GlcNAc...) asparagine; by host glycosylation is found at Asn83, Asn110, Asn145, Asn171, Asn196, and Asn251. Cys107 and Cys155 are joined by a disulfide. Positions 122–239 (RFYRALYSNM…GSYKIFSTGF (118 aa)) are receptor binding. Intrachain disulfides connect Cys183-Cys249 and Cys191-Cys222. The interval 240-352 (VLSIPTKALC…NCPTSAYIKL (113 aa)) is esterase domain 2. An intrachain disulfide couples Cys280 to Cys285. An N-linked (GlcNAc...) asparagine; by host glycan is attached at Asn289. Catalysis depends on charge relay system residues Asp299 and His302. Cysteines 320 and 344 form a disulfide. The N-linked (GlcNAc...) asparagine; by host glycan is linked to Asn331. The chain crosses the membrane as a helical span at residues 362–382 (ILQGILLFLALLFIVFLLFLV). At 383-385 (YHG) the chain is on the intravirion side.

It belongs to the influenza type C/coronaviruses hemagglutinin-esterase family. In terms of assembly, homodimer; disulfide-linked. Forms a complex with the M protein in the pre-Golgi. Associates then with S-M complex to form a ternary complex S-M-HE. Post-translationally, N-glycosylated in the host RER.

It is found in the virion membrane. The protein resides in the host cell membrane. It carries out the reaction N-acetyl-9-O-acetylneuraminate + H2O = N-acetylneuraminate + acetate + H(+). The enzyme catalyses N-acetyl-4-O-acetylneuraminate + H2O = N-acetylneuraminate + acetate + H(+). Structural protein that makes short spikes at the surface of the virus. Contains receptor binding and receptor-destroying activities. Mediates de-O-acetylation of N-acetyl-4-O-acetylneuraminic acid, which is probably the receptor determinant recognized by the virus on the surface of erythrocytes and susceptible cells. This receptor-destroying activity is important for virus release as it probably helps preventing self-aggregation and ensures the efficient spread of the progeny virus from cell to cell. May serve as a secondary viral attachment protein for initiating infection, the spike protein being the major one. May become a target for both the humoral and the cellular branches of the immune system. The polypeptide is Hemagglutinin-esterase (Human coronavirus HKU1 (isolate N2) (HCoV-HKU1)).